A 318-amino-acid chain; its full sequence is Olfactory receptor-like protein COR3 (318 aa).

At 1 to 26 (MASGNCTTPTTFILSGLTDNPGLQMP) the chain is on the extracellular side. Residue Asn-5 is glycosylated (N-linked (GlcNAc...) asparagine). The chain crosses the membrane as a helical span at residues 27 to 49 (LFMVFLAIYTITLLTNLGLIRLI). At 50–57 (SVDLHLQT) the chain is on the cytoplasmic side. A helical membrane pass occupies residues 58-79 (PMYIFLQNLSFTDAAYSTVITP). Residues 80-100 (KMLATFLEERKTISYVGCILQ) lie on the Extracellular side of the membrane. A disulfide bridge connects residues Cys-97 and Cys-179. The helical transmembrane segment at 101 to 120 (YFSFVLLTTSECLLLAVMAY) threads the bilayer. The Cytoplasmic portion of the chain corresponds to 121–139 (DRYVAICKPLLYPAIMTKA). The helical transmembrane segment at 140–164 (VCWRLVESLYFLAFLNSLVHTCGLL) threads the bilayer. Topologically, residues 165–205 (KLSFCYSNVVNHFFCDISPLFQISSSSIAISELLVIISGSL) are extracellular. Residues 206-226 (FVMSSIIIILISYVFIILTVV) traverse the membrane as a helical segment. The Cytoplasmic portion of the chain corresponds to 227–239 (MIRSKDGKYKAFS). Residues 240–260 (TCTSHLMAVSLFHGTVIFMYL) traverse the membrane as a helical segment. Over 261–271 (RPVKLFSLDTD) the chain is Extracellular. The chain crosses the membrane as a helical span at residues 272 to 292 (KIASLFYTVVIPMLNPLIYSW). Topologically, residues 293–318 (RNKEVKDALRRLTATTFGFIDSKAVQ) are cytoplasmic.

It belongs to the G-protein coupled receptor 1 family.

Its subcellular location is the cell membrane. Functionally, odorant receptor. The chain is Olfactory receptor-like protein COR3 (COR3) from Gallus gallus (Chicken).